The sequence spans 169 residues: Cell division inhibitor SulA (169 aa).

Residues 106–112 (ALRTGNY) are ftsZ binding. Residues 162-169 (KIHSNLYH) are lon protease binding.

Belongs to the SulA family. Interacts with FtsZ. Is rapidly cleaved and degraded by the Lon protease once DNA damage is repaired.

In terms of biological role, component of the SOS system and an inhibitor of cell division. Accumulation of SulA causes rapid cessation of cell division and the appearance of long, non-septate filaments. In the presence of GTP, binds a polymerization-competent form of FtsZ in a 1:1 ratio, thus inhibiting FtsZ polymerization and therefore preventing it from participating in the assembly of the Z ring. This mechanism prevents the premature segregation of damaged DNA to daughter cells during cell division. The protein is Cell division inhibitor SulA of Shigella boydii serotype 18 (strain CDC 3083-94 / BS512).